A 376-amino-acid chain; its full sequence is Rhodopsin (376 aa).

Residues Met1–Met52 are Extracellular-facing. An N-linked (GlcNAc...) asparagine glycan is attached at Asn23. The chain crosses the membrane as a helical span at residues Tyr53–Val77. Topologically, residues Phe78–Asn89 are cytoplasmic. Residues Leu90 to Val112 form a helical membrane-spanning segment. The Extracellular portion of the chain corresponds to Thr113–Cys126. Cys126 and Cys203 form a disulfide bridge. The helical transmembrane segment at Gln127–Phe149 threads the bilayer. The 'Ionic lock' involved in activated form stabilization motif lies at Asp150–Tyr152. Topologically, residues Asp150–Lys168 are cytoplasmic. Residues Ala169–Phe189 form a helical membrane-spanning segment. The Extracellular portion of the chain corresponds to Gly190–Ser216. Asn199 carries N-linked (GlcNAc...) asparagine glycosylation. A helical membrane pass occupies residues Tyr217–Val237. The Cytoplasmic portion of the chain corresponds to Ser238–Lys278. Residues Ile279–Val300 form a helical membrane-spanning segment. Residues Gly301–Val311 lie on the Extracellular side of the membrane. A helical transmembrane segment spans residues Tyr312–Ile333. Lys321 carries the post-translational modification N6-(retinylidene)lysine. Topologically, residues Ser334–Ala376 are cytoplasmic. The segment at Thr353–Ala376 is disordered.

This sequence belongs to the G-protein coupled receptor 1 family. Opsin subfamily. As to quaternary structure, homodimer. Interacts with GNAQ. Post-translationally, contains one covalently linked retinal chromophore. As to expression, detected on rhabdomere membranes on photoreceptor cells in the retina (at protein level).

It is found in the cell projection. Its subcellular location is the rhabdomere membrane. Photoreceptor required for image-forming vision at low light intensity. Can use both retinal and 3-dehydroretinal as visual pigment. Light-induced isomerization of 11-cis to all-trans retinal triggers a conformational change that activates signaling via G-proteins. Signaling via GNAQ probably mediates the activation of phospholipase C. The chain is Rhodopsin (RHO) from Procambarus clarkii (Red swamp crayfish).